A 141-amino-acid chain; its full sequence is Putative pre-16S rRNA nuclease (141 aa).

It belongs to the YqgF nuclease family.

The protein localises to the cytoplasm. In terms of biological role, could be a nuclease involved in processing of the 5'-end of pre-16S rRNA. The sequence is that of Putative pre-16S rRNA nuclease from Coxiella burnetii (strain CbuK_Q154) (Coxiella burnetii (strain Q154)).